The chain runs to 179 residues: Avenin-like a2 (179 aa).

Positions 1–19 (MKTMFLLALLAFTATSAVA) are cleaved as a signal peptide.

It belongs to the prolamin family. Post-translationally, contains 7 disulfide bonds.

Its function is as follows. Seed storage protein. Not integrated in the gluten polymer through disulfide bonds, unless incorporated by reduction and reoxidation during dough making. Increases dough strength and bread volume, but decreases dough stability when added into a base wheat flour. The sequence is that of Avenin-like a2 from Triticum aestivum (Wheat).